A 754-amino-acid polypeptide reads, in one-letter code: Probable TonB-dependent siderophore receptor PirA (754 aa).

A signal peptide spans 1 to 24 (MSKRIIQSVLSVSVLASMMSMAFA). In terms of domain architecture, TBDR plug spans 54–181 (EQVKQSLGVS…AGGVVNIITK (128 aa)). A TBDR beta-barrel domain is found at 186–754 (ETHGSVEFYT…AYYASLKYSF (569 aa)). The segment covering 404 to 414 (VSTTQGKDSSG) has biased composition (polar residues). The segment at 404–424 (VSTTQGKDSSGSGYGDQLAKG) is disordered. A disulfide bond links C511 and C519. The short motif at 737–754 (QTYNEPGRAYYASLKYSF) is the TonB C-terminal box element.

The protein belongs to the TonB-dependent receptor family.

The protein resides in the cell outer membrane. Functionally, probably involved in the initial step of iron uptake by binding iron chelating siderophores, thereby allowing extraction of iron from the environment. May bind the siderophore, ferric enterobactin, with micromolar affinity. The polypeptide is Probable TonB-dependent siderophore receptor PirA (Acinetobacter baumannii (strain ATCC 19606 / DSM 30007 / JCM 6841 / CCUG 19606 / CIP 70.34 / NBRC 109757 / NCIMB 12457 / NCTC 12156 / 81)).